Consider the following 261-residue polypeptide: Enolase-phosphatase E1 (261 aa).

The Mg(2+) site is built by aspartate 16 and glutamate 18. Residues 150–151 (SS) and lysine 184 contribute to the substrate site. Position 209 (aspartate 209) interacts with Mg(2+).

This sequence belongs to the HAD-like hydrolase superfamily. MasA/MtnC family. As to quaternary structure, monomer. Mg(2+) serves as cofactor.

The protein localises to the cytoplasm. Its subcellular location is the nucleus. The enzyme catalyses 5-methylsulfanyl-2,3-dioxopentyl phosphate + H2O = 1,2-dihydroxy-5-(methylsulfanyl)pent-1-en-3-one + phosphate. Its pathway is amino-acid biosynthesis; L-methionine biosynthesis via salvage pathway; L-methionine from S-methyl-5-thio-alpha-D-ribose 1-phosphate: step 3/6. It functions in the pathway amino-acid biosynthesis; L-methionine biosynthesis via salvage pathway; L-methionine from S-methyl-5-thio-alpha-D-ribose 1-phosphate: step 4/6. Functionally, bifunctional enzyme that catalyzes the enolization of 2,3-diketo-5-methylthiopentyl-1-phosphate (DK-MTP-1-P) into the intermediate 2-hydroxy-3-keto-5-methylthiopentenyl-1-phosphate (HK-MTPenyl-1-P), which is then dephosphorylated to form the acireductone 1,2-dihydroxy-3-keto-5-methylthiopentene (DHK-MTPene). This Rattus norvegicus (Rat) protein is Enolase-phosphatase E1 (Enoph1).